A 331-amino-acid chain; its full sequence is MGIVDQPQSKGQESTPGDFAAVQKSIIDLLNQPDYDDGSAGPVLVRLAWHSSGTYDKVTDTGGSNGAGMRYEAEGGDPANAGLQNARVFLEPVKRLHPWITYSDLWTLAGVTAIHAMGGPEIDWLPGRTDFVDDSKLPPRGRLPDAAQGAEHIRHIFYRMGFNDREIVALSGAHNLGRCHTANSGFEGKWVNNPTRFSNQYFRLLLSETWTEKTIPESGLLQFSSVDQDTEEELMMLPTDIALTTDSEFSKYVQLYAKDKDVFFQDFKKAFAKLLELGIARNSEGKVINTDNQKGGYRSAPKKSDSTPATSGQPGASKTGGCPVMHHKAKL.

H50 acts as the Proton acceptor in catalysis. Residue H174 participates in heme b binding. W190 serves as the catalytic Tryptophan radical intermediate. Positions 288–331 (INTDNQKGGYRSAPKKSDSTPATSGQPGASKTGGCPVMHHKAKL) are disordered. Polar residues predominate over residues 306–316 (STPATSGQPGA).

This sequence belongs to the peroxidase family. Cytochrome c peroxidase subfamily. It depends on heme b as a cofactor.

Functionally, destroys radicals which are normally produced within the cells and which are toxic to biological systems. The protein is Putative heme-binding peroxidase of Gibberella zeae (strain ATCC MYA-4620 / CBS 123657 / FGSC 9075 / NRRL 31084 / PH-1) (Wheat head blight fungus).